A 204-amino-acid polypeptide reads, in one-letter code: MIGRLRGVVIEKQPPEVLLEVGGLGYEVQMPMSCFYDLPEIGKEVTIHTHFVVREDAQLLYGFNHKQERALFRELIKTNGVGPKLALAILSGMTATQFVLSVEREEISSLIKLPGVGKKTAERLVVEMKDRLKGWVSHDLFSPAEISLPARESVLRAPDSSEEAASALVALGYKPQQASQIVSKIAKEGMSVEDIIRESLRSLV.

Residues 1–64 are domain I; the sequence is MIGRLRGVVI…EDAQLLYGFN (64 aa). The segment at 65–143 is domain II; it reads HKQERALFRE…GWVSHDLFSP (79 aa). Positions 144–155 are flexible linker; that stretch reads AEISLPARESVL. Residues 156-204 form a domain III region; that stretch reads RAPDSSEEAASALVALGYKPQQASQIVSKIAKEGMSVEDIIRESLRSLV.

It belongs to the RuvA family. Homotetramer. Forms an RuvA(8)-RuvB(12)-Holliday junction (HJ) complex. HJ DNA is sandwiched between 2 RuvA tetramers; dsDNA enters through RuvA and exits via RuvB. An RuvB hexamer assembles on each DNA strand where it exits the tetramer. Each RuvB hexamer is contacted by two RuvA subunits (via domain III) on 2 adjacent RuvB subunits; this complex drives branch migration. In the full resolvosome a probable DNA-RuvA(4)-RuvB(12)-RuvC(2) complex forms which resolves the HJ.

It localises to the cytoplasm. The RuvA-RuvB-RuvC complex processes Holliday junction (HJ) DNA during genetic recombination and DNA repair, while the RuvA-RuvB complex plays an important role in the rescue of blocked DNA replication forks via replication fork reversal (RFR). RuvA specifically binds to HJ cruciform DNA, conferring on it an open structure. The RuvB hexamer acts as an ATP-dependent pump, pulling dsDNA into and through the RuvAB complex. HJ branch migration allows RuvC to scan DNA until it finds its consensus sequence, where it cleaves and resolves the cruciform DNA. This is Holliday junction branch migration complex subunit RuvA from Aeromonas salmonicida (strain A449).